Consider the following 332-residue polypeptide: Methylthioribose-1-phosphate isomerase (332 aa).

Substrate contacts are provided by residues 44–46, Arg87, and Gln192; that span reads RGA. Asp233 (proton donor) is an active-site residue. A substrate-binding site is contributed by 243–244; it reads NK.

This sequence belongs to the eIF-2B alpha/beta/delta subunits family. MtnA subfamily.

It catalyses the reaction 5-(methylsulfanyl)-alpha-D-ribose 1-phosphate = 5-(methylsulfanyl)-D-ribulose 1-phosphate. The protein operates within amino-acid biosynthesis; L-methionine biosynthesis via salvage pathway; L-methionine from S-methyl-5-thio-alpha-D-ribose 1-phosphate: step 1/6. Functionally, catalyzes the interconversion of methylthioribose-1-phosphate (MTR-1-P) into methylthioribulose-1-phosphate (MTRu-1-P). This chain is Methylthioribose-1-phosphate isomerase, found in Dehalococcoides mccartyi (strain ATCC BAA-2100 / JCM 16839 / KCTC 5957 / BAV1).